The primary structure comprises 217 residues: Killer cell lectin-like receptor subfamily B member 1F (217 aa).

Residues 1–45 lie on the Cytoplasmic side of the membrane; it reads MDTSKVHGNVKPFRCPGYKQASSPSFSPDACRCPHWHHLALKSGC. The short motif at 31 to 34 is the LCK-binding motif element; it reads CRCP. A helical; Signal-anchor for type II membrane protein transmembrane segment spans residues 46–66; it reads AGLILLLLSLIGLSVLVRFLV. Over 67-217 the chain is Extracellular; sequence QKPPIEKCSV…WICQKTLIHV (151 aa). Asn-81 is a glycosylation site (N-linked (GlcNAc...) asparagine). A C-type lectin domain is found at 101–211; it reads HWNKCLFVSQ…CSSDNHWICQ (111 aa). 2 disulfide bridges follow: Cys-122/Cys-210 and Cys-189/Cys-202.

As to expression, highly expressed in dendritic cells. Detectable in natural killer cells.

Its subcellular location is the membrane. Functionally, binds CLEC2I/Clr-g leading to activation of natural killer cells or costimulation of IL-2 production and proliferation of T-cells in response to antigen stimulation. May contribute to the formation of the immunological synapse between T-cells and antigen-presenting dendritic cells. This Mus musculus (Mouse) protein is Killer cell lectin-like receptor subfamily B member 1F (Klrb1f).